The chain runs to 382 residues: Apolipoprotein A-IV (382 aa).

The first 20 residues, 1–20 (MFLKAVVLSLALVAVTGARA), serve as a signal peptide directing secretion. 13 consecutive repeat copies span residues 33–54 (DYFSQLGSNAKKAVEHLQKSEL), 60–81 (TLFQDKLGEVNTYTEDLQKKLV), 82–103 (PFATELHERLTKDSEKLKEEIR), 115–136 (PHATEVSQKIGDNVRELQQRLG), 137–158 (PFTGGLRTQVNTQVQQLQRQLK), 159–180 (PYAERMESVLRQNIRNLEASVA), 181–202 (PYADEFKAKIDQNVEELKGSLT), 203–224 (PYAEELKAKIDQNVEELRRSLA), 225–246 (PYAQDVQEKLNHQLEGLAFQMK), 247–268 (KQAEELKAKISANADELRQKLV), 269–286 (PVAENVHGHLKGNTEGLQ), 287–308 (KSLLELRSHLDQQVEEFRLKVE), and 309–330 (PYGETFNKALVQQVEDLRQKLG). The tract at residues 33-330 (DYFSQLGSNA…QVEDLRQKLG (298 aa)) is 13 X 22 AA approximate tandem repeats. The interval 361–382 (EASQGQSQALPAQEKAQAPLEG) is disordered.

The protein belongs to the apolipoprotein A1/A4/E family. Homodimer. As to expression, secreted in plasma.

The protein localises to the secreted. May have a role in chylomicrons and VLDL secretion and catabolism. Required for efficient activation of lipoprotein lipase by ApoC-II; potent activator of LCAT. Apoa-IV is a major component of HDL and chylomicrons. This chain is Apolipoprotein A-IV (APOA4), found in Sus scrofa (Pig).